We begin with the raw amino-acid sequence, 569 residues long: Urease subunit beta (569 aa).

Residues 131–569 (GGIDTHIHFI…VSLAQLFSIF (439 aa)) form the Urease domain. Residues histidine 136, histidine 138, and lysine 219 each coordinate Ni(2+). Lysine 219 is modified (N6-carboxylysine). Substrate is bound at residue histidine 221. 2 residues coordinate Ni(2+): histidine 248 and histidine 274. Histidine 322 acts as the Proton donor in catalysis. Aspartate 362 serves as a coordination point for Ni(2+).

This sequence belongs to the metallo-dependent hydrolases superfamily. Urease alpha subunit family. In terms of assembly, heterohexamer of 3 UreA (alpha) and 3 UreB (beta) subunits. Ni cation serves as cofactor. Carboxylation allows a single lysine to coordinate two nickel ions.

The protein resides in the cytoplasm. The enzyme catalyses urea + 2 H2O + H(+) = hydrogencarbonate + 2 NH4(+). Its pathway is nitrogen metabolism; urea degradation; CO(2) and NH(3) from urea (urease route): step 1/1. The polypeptide is Urease subunit beta (Helicobacter pylori (strain Shi470)).